The following is a 276-amino-acid chain: 1H-3-hydroxy-4-oxoquinaldine 2,4-dioxygenase (276 aa).

The AB hydrolase-1 domain occupies 28–150; the sequence is PAILLLPGWC…TLLKDPERWR (123 aa). Substrate is bound by residues 36-38, 100-101, and Trp160; these read WCH and HS. The active-site Proton donor/acceptor is His251.

This sequence belongs to the AB hydrolase superfamily. Requires None. Contrary to most other dioxygenases, this enzyme does not require a cofactor for catalysis. as cofactor.

It carries out the reaction 3-hydroxy-2-methyl-1H-quinolin-4-one + O2 = N-acetylanthranilate + CO + H(+). Its function is as follows. Ring-cleaving dioxygenase involved in quinaldine degradation and utilization. The sequence is that of 1H-3-hydroxy-4-oxoquinaldine 2,4-dioxygenase (hod) from Paenarthrobacter nitroguajacolicus (Arthrobacter nitroguajacolicus).